We begin with the raw amino-acid sequence, 179 residues long: Large ribosomal subunit protein uL6 (179 aa).

This sequence belongs to the universal ribosomal protein uL6 family. In terms of assembly, part of the 50S ribosomal subunit.

In terms of biological role, this protein binds to the 23S rRNA, and is important in its secondary structure. It is located near the subunit interface in the base of the L7/L12 stalk, and near the tRNA binding site of the peptidyltransferase center. This Rippkaea orientalis (strain PCC 8801 / RF-1) (Cyanothece sp. (strain PCC 8801)) protein is Large ribosomal subunit protein uL6.